We begin with the raw amino-acid sequence, 105 residues long: Small ribosomal subunit protein uS10 (105 aa).

The protein belongs to the universal ribosomal protein uS10 family. In terms of assembly, part of the 30S ribosomal subunit.

Functionally, involved in the binding of tRNA to the ribosomes. The chain is Small ribosomal subunit protein uS10 from Thermus thermophilus (strain ATCC BAA-163 / DSM 7039 / HB27).